Reading from the N-terminus, the 394-residue chain is NADH-quinone oxidoreductase subunit D 2 (394 aa).

It belongs to the complex I 49 kDa subunit family. NDH-1 is composed of 14 different subunits. Subunits NuoB, C, D, E, F, and G constitute the peripheral sector of the complex.

The protein localises to the cell membrane. It carries out the reaction a quinone + NADH + 5 H(+)(in) = a quinol + NAD(+) + 4 H(+)(out). Functionally, NDH-1 shuttles electrons from NADH, via FMN and iron-sulfur (Fe-S) centers, to quinones in the respiratory chain. The immediate electron acceptor for the enzyme in this species is believed to be a menaquinone. Couples the redox reaction to proton translocation (for every two electrons transferred, four hydrogen ions are translocated across the cytoplasmic membrane), and thus conserves the redox energy in a proton gradient. The sequence is that of NADH-quinone oxidoreductase subunit D 2 from Streptomyces griseus subsp. griseus (strain JCM 4626 / CBS 651.72 / NBRC 13350 / KCC S-0626 / ISP 5235).